Consider the following 520-residue polypeptide: Ribonuclease Y (520 aa).

Residues 3 to 23 (IVIVVISILLALIVGIVVGYL) traverse the membrane as a helical segment. The segment covering 81-118 (RMEAQKQENRLMQKEENLDRKSETLDKRESSLESKEQS) has biased composition (basic and acidic residues). Positions 81 to 125 (RMEAQKQENRLMQKEENLDRKSETLDKRESSLESKEQSLTEQQQQ) are disordered. Residues 210 to 273 (TVSVVNLPND…EIARMALEKL (64 aa)) enclose the KH domain. An HD domain is found at 336 to 429 (GLKHSAEVAY…VAAADALSAA (94 aa)).

The protein belongs to the RNase Y family.

Its subcellular location is the cell membrane. Functionally, endoribonuclease that initiates mRNA decay. This is Ribonuclease Y from Oceanobacillus iheyensis (strain DSM 14371 / CIP 107618 / JCM 11309 / KCTC 3954 / HTE831).